Reading from the N-terminus, the 1259-residue chain is Receptor tyrosine-protein kinase erbB-2 (1259 aa).

The first 22 residues, 1-22 (MELAAWCRWGLLLALLPSGAAG), serve as a signal peptide directing secretion. Topologically, residues 23–653 (TQVCTGTDMK…EQRASPVTSI (631 aa)) are extracellular. Residues cysteine 26 and cysteine 53 are joined by a disulfide bond. Asparagine 68 is a glycosylation site (N-linked (GlcNAc...) asparagine). Disulfide bonds link cysteine 162–cysteine 192, cysteine 195–cysteine 204, cysteine 199–cysteine 212, cysteine 220–cysteine 227, cysteine 224–cysteine 235, cysteine 236–cysteine 244, cysteine 240–cysteine 252, cysteine 255–cysteine 264, cysteine 268–cysteine 295, cysteine 299–cysteine 311, cysteine 315–cysteine 331, cysteine 334–cysteine 338, and cysteine 342–cysteine 367. Position 182 is a phosphothreonine (threonine 182). Asparagine 259 is a glycosylation site (N-linked (GlcNAc...) asparagine). Asparagine 421 carries N-linked (GlcNAc...) asparagine glycosylation. 3 cysteine pairs are disulfide-bonded: cysteine 475-cysteine 504, cysteine 511-cysteine 519, and cysteine 514-cysteine 527. A glycan (N-linked (GlcNAc...) asparagine) is linked at asparagine 529. Disulfide bonds link cysteine 530-cysteine 539, cysteine 543-cysteine 559, cysteine 562-cysteine 575, cysteine 566-cysteine 583, cysteine 586-cysteine 595, cysteine 599-cysteine 622, cysteine 625-cysteine 633, and cysteine 629-cysteine 641. Residue asparagine 570 is glycosylated (N-linked (GlcNAc...) asparagine). A glycan (N-linked (GlcNAc...) asparagine) is linked at asparagine 628. A helical transmembrane segment spans residues 654-674 (IAAVVGILLAVVVGLVLGILI). The required for interaction with KPNB1 and EEA1 stretch occupies residues 675 to 688 (KRRRQKIRKYTMRR). The Nuclear localization signal motif lies at 675-688 (KRRRQKIRKYTMRR). The Cytoplasmic portion of the chain corresponds to 675–1259 (KRRRQKIRKY…PEYLGLDVPV (585 aa)). One can recognise a Protein kinase domain in the interval 719-986 (LRKVKVLGSG…RMARDPQRFV (268 aa)). Residues 725–733 (LGSGAFGTV) and lysine 752 each bind ATP. Catalysis depends on aspartate 844, which acts as the Proton acceptor. Tyrosine 876 carries the post-translational modification Phosphotyrosine. A disordered region spans residues 1027–1183 (QGFFCPEPTP…PKTLSPGKNG (157 aa)). Phosphoserine is present on residues serine 1077, serine 1082, and serine 1106. Tyrosine 1111 bears the Phosphotyrosine mark. Tyrosine 1138 carries the post-translational modification Phosphotyrosine; by autocatalysis. Over residues 1145 to 1160 (WPQPPLALEGPLPPSR) the composition is skewed to pro residues. The residue at position 1165 (threonine 1165) is a Phosphothreonine. Residues 1199–1201 (EYL) form an interaction with PIK3C2B region. Position 1200 is a phosphotyrosine (tyrosine 1200). Positions 1203–1259 (PRGRAAPQPHPPPAFSPAFDNLYYWDQDPSERGSPPSTFEGTPTAENPEYLGLDVPV) are disordered. Over residues 1237-1247 (PPSTFEGTPTA) the composition is skewed to polar residues. Phosphotyrosine; by autocatalysis is present on tyrosine 1252.

The protein belongs to the protein kinase superfamily. Tyr protein kinase family. EGF receptor subfamily. In terms of assembly, homodimer. Heterodimer with EGFR, ERBB3 and ERBB4. Part of a complex with EGFR and either PIK3C2A or PIK3C2B. May interact with PIK3C2B when phosphorylated on Tyr-1200. Interacts with PRKCABP and PLXNB1. Interacts (when phosphorylated on Tyr-1252) with MEMO1. Interacts with MUC1. Interacts (when phosphorylated on Tyr-1138) with GRB7 (via SH2 domain). Interacts (when phosphorylated on Tyr-1252) with ERBIN. Interacts with SRC, KPNB1, PTK6, RANBP2, EEA1, CRM1, CLTC, RPA194, MYOC and ACTB. Interacts (preferentially with the tyrosine phosphorylated form) with CPNE3; this interaction occurs at the cell membrane and is increased in a growth factor heregulin-dependent manner. Interacts with HSP90AA1 and HSP90AB1 in an ATP-dependent manner; the interaction suppresses ERBB2 kinase activity. Interacts with SORL1; this interaction regulates ERBB2 subcellular distribution by promoting its recycling after internalization from endosomes back to the plasma membrane, hence stimulates ERBB2-mediated signaling. Interacts with SH3BGRL. Interacts with ROR1. In terms of processing, autophosphorylated. Autophosphorylation occurs in trans, i.e. one subunit of the dimeric receptor phosphorylates tyrosine residues on the other subunit. Ligand-binding increases phosphorylation on tyrosine residues. Signaling via SEMA4C promotes phosphorylation at Tyr-1252. Dephosphorylated by PTPN12.

The protein resides in the cell membrane. It is found in the cell projection. It localises to the ruffle membrane. The protein localises to the early endosome. Its subcellular location is the cytoplasm. The protein resides in the perinuclear region. It is found in the nucleus. It catalyses the reaction L-tyrosyl-[protein] + ATP = O-phospho-L-tyrosyl-[protein] + ADP + H(+). In terms of biological role, protein tyrosine kinase that is part of several cell surface receptor complexes, but that apparently needs a coreceptor for ligand binding. Essential component of a neuregulin-receptor complex, although neuregulins do not interact with it alone. GP30 is a potential ligand for this receptor. Regulates outgrowth and stabilization of peripheral microtubules (MTs). Upon ERBB2 activation, the MEMO1-RHOA-DIAPH1 signaling pathway elicits the phosphorylation and thus the inhibition of GSK3B at cell membrane. This prevents the phosphorylation of APC and CLASP2, allowing its association with the cell membrane. In turn, membrane-bound APC allows the localization of MACF1 to the cell membrane, which is required for microtubule capture and stabilization. In the nucleus is involved in transcriptional regulation. Associates with the 5'-TCAAATTC-3' sequence in the PTGS2/COX-2 promoter and activates its transcription. Implicated in transcriptional activation of CDKN1A; the function involves STAT3 and SRC. Involved in the transcription of rRNA genes by RNA Pol I and enhances protein synthesis and cell growth. The polypeptide is Receptor tyrosine-protein kinase erbB-2 (ERBB2) (Canis lupus familiaris (Dog)).